We begin with the raw amino-acid sequence, 347 residues long: GTPase Obg (347 aa).

The 159-residue stretch at 1–159 (MHFIDQAEIE…VRLRLELKLI (159 aa)) folds into the Obg domain. Residues 160 to 328 (AEVGIVGLPN…LLQRVWQCLG (169 aa)) enclose the OBG-type G domain. Residues 166 to 173 (GLPNAGKS), 191 to 195 (FTTLQ), 213 to 216 (DIPG), 280 to 283 (NKID), and 309 to 311 (SAI) contribute to the GTP site. Positions 173 and 193 each coordinate Mg(2+).

Belongs to the TRAFAC class OBG-HflX-like GTPase superfamily. OBG GTPase family. Monomer. It depends on Mg(2+) as a cofactor.

The protein resides in the cytoplasm. Its function is as follows. An essential GTPase which binds GTP, GDP and possibly (p)ppGpp with moderate affinity, with high nucleotide exchange rates and a fairly low GTP hydrolysis rate. Plays a role in control of the cell cycle, stress response, ribosome biogenesis and in those bacteria that undergo differentiation, in morphogenesis control. The sequence is that of GTPase Obg from Synechococcus sp. (strain JA-2-3B'a(2-13)) (Cyanobacteria bacterium Yellowstone B-Prime).